We begin with the raw amino-acid sequence, 147 residues long: 3-dehydroquinate dehydratase (147 aa).

Residue tyrosine 23 is the Proton acceptor of the active site. Asparagine 74, histidine 80, and aspartate 87 together coordinate substrate. Histidine 100 acts as the Proton donor in catalysis. Residues 101 to 102 (LS) and arginine 111 each bind substrate.

The protein belongs to the type-II 3-dehydroquinase family. In terms of assembly, homododecamer.

The enzyme catalyses 3-dehydroquinate = 3-dehydroshikimate + H2O. It participates in metabolic intermediate biosynthesis; chorismate biosynthesis; chorismate from D-erythrose 4-phosphate and phosphoenolpyruvate: step 3/7. Its function is as follows. Catalyzes a trans-dehydration via an enolate intermediate. In Clostridium botulinum (strain Loch Maree / Type A3), this protein is 3-dehydroquinate dehydratase.